A 483-amino-acid chain; its full sequence is Regulatory protein ViaA (483 aa).

The protein belongs to the ViaA family. As to quaternary structure, homodimer. Interacts with RavA.

The protein resides in the cytoplasm. Functionally, component of the RavA-ViaA chaperone complex, which may act on the membrane to optimize the function of some of the respiratory chains. ViaA stimulates the ATPase activity of RavA. The polypeptide is Regulatory protein ViaA (Salmonella schwarzengrund (strain CVM19633)).